A 367-amino-acid polypeptide reads, in one-letter code: Lysophosphatidic acid receptor 5 (367 aa).

At 1–25 (MQANSSAKSLPTECPDYQPIHHLHL) the chain is on the extracellular side. Asn4 carries N-linked (GlcNAc...) asparagine glycosylation. The helical transmembrane segment at 26-46 (VVYSVVLAAGLPLNALALWVF) threads the bilayer. The Cytoplasmic portion of the chain corresponds to 47 to 54 (LRALRVHS). A helical transmembrane segment spans residues 55-75 (VVSVYMCNLAASDLLFTLSLP). At 76-95 (LRLSYYARHYWPFPDFLCQL) the chain is on the extracellular side. The cysteines at positions 93 and 174 are disulfide-linked. The chain crosses the membrane as a helical span at residues 96 to 116 (AGAVFQMNMYGSCIFLTLINV). The Cytoplasmic segment spans residues 117 to 135 (DRYAAIVHPLRLRHLRRPR). A helical transmembrane segment spans residues 136–156 (VARLLCLGVWALILVFAVPTI). Over 157–186 (LAHQPSSCARDGRNVSLCFESFSDKLWKGS) the chain is Extracellular. N-linked (GlcNAc...) asparagine glycosylation is present at Asn170. The helical transmembrane segment at 187–207 (LLPLLLLAEALGFLLPLAAVV) threads the bilayer. The Cytoplasmic portion of the chain corresponds to 208 to 238 (YSSGRVFWTLARPDATRSQRRRKTVRLLLAS). The helical transmembrane segment at 239–259 (LVIFLLCFVPYNATLAVYGLL) threads the bilayer. At 260 to 275 (RGEVVPASSEARKKVR) the chain is on the extracellular side. A helical membrane pass occupies residues 276–296 (GVLMVMVLLAGANCVLDPLVY). Over 297-367 (YFSAEGFRNT…FTPSHEDSSF (71 aa)) the chain is Cytoplasmic. The segment covering 332-350 (LTETAHASTLTTTSQGQLQ) has biased composition (low complexity). Residues 332–367 (LTETAHASTLTTTSQGQLQPSDPRSSFTPSHEDSSF) are disordered. Residues 351-360 (PSDPRSSFTP) are compositionally biased toward polar residues.

Belongs to the G-protein coupled receptor 1 family.

It localises to the cell membrane. In terms of biological role, receptor for lysophosphatidic acid (LPA), a mediator of diverse cellular activities. The polypeptide is Lysophosphatidic acid receptor 5 (LPAR5) (Bos taurus (Bovine)).